The following is a 591-amino-acid chain: Transcription factor COE1-A (591 aa).

The segment at 63-66 is interaction with DNA; sequence RKSN. The C5-type zinc-finger motif lies at 151 to 170; it reads CRVLLTHEIMCSRCCDKKSC. Interaction with DNA stretches follow at residues 197-204 and 236-239; these read NCLKNAGN and NNSK. The region spanning 262 to 344 is the IPT/TIG domain; sequence PCIKAISPSE…CKGTPGRFIY (83 aa). Over residues 454 to 466 the composition is skewed to polar residues; the sequence is ANQGFSRNTSSVS. A disordered region spans residues 454–484; sequence ANQGFSRNTSSVSPHGYVPSTTPQQSSYSTV. Residues 471 to 484 are compositionally biased toward low complexity; sequence VPSTTPQQSSYSTV.

This sequence belongs to the COE family. Forms either a homodimer or a heterodimer with a related family member. Detected in B cells.

It localises to the nucleus. Transcriptional activator. The chain is Transcription factor COE1-A from Danio rerio (Zebrafish).